The chain runs to 120 residues: Ribosome-binding factor A (120 aa).

The protein belongs to the RbfA family. In terms of assembly, monomer. Binds 30S ribosomal subunits, but not 50S ribosomal subunits or 70S ribosomes.

Its subcellular location is the cytoplasm. Functionally, one of several proteins that assist in the late maturation steps of the functional core of the 30S ribosomal subunit. Associates with free 30S ribosomal subunits (but not with 30S subunits that are part of 70S ribosomes or polysomes). Required for efficient processing of 16S rRNA. May interact with the 5'-terminal helix region of 16S rRNA. In Lactobacillus delbrueckii subsp. bulgaricus (strain ATCC 11842 / DSM 20081 / BCRC 10696 / JCM 1002 / NBRC 13953 / NCIMB 11778 / NCTC 12712 / WDCM 00102 / Lb 14), this protein is Ribosome-binding factor A.